The following is a 135-amino-acid chain: Sex-regulated protein janus-A (135 aa).

K37 is a binding site for substrate. H63 functions as the Proton acceptor in the catalytic mechanism. Substrate is bound at residue 104 to 106 (SQG).

Belongs to the janus family.

JanA and janB regulate somatic sex differentiation. The protein is Sex-regulated protein janus-A (janA) of Drosophila orena (Fruit fly).